A 267-amino-acid chain; its full sequence is NH(3)-dependent NAD(+) synthetase (267 aa).

38–45 (GISGGVDS) lines the ATP pocket. Position 44 (Asp44) interacts with Mg(2+). Deamido-NAD(+) is bound at residue Arg123. Thr143 is a binding site for ATP. Glu148 is a Mg(2+) binding site. Deamido-NAD(+) is bound by residues Lys156 and Asp163. 2 residues coordinate ATP: Lys172 and Ser193. Deamido-NAD(+) is bound at residue 250 to 251 (HK).

It belongs to the NAD synthetase family. As to quaternary structure, homodimer.

The catalysed reaction is deamido-NAD(+) + NH4(+) + ATP = AMP + diphosphate + NAD(+) + H(+). Its pathway is cofactor biosynthesis; NAD(+) biosynthesis; NAD(+) from deamido-NAD(+) (ammonia route): step 1/1. Catalyzes the ATP-dependent amidation of deamido-NAD to form NAD. Uses ammonia as a nitrogen source. The polypeptide is NH(3)-dependent NAD(+) synthetase (Pyrobaculum aerophilum (strain ATCC 51768 / DSM 7523 / JCM 9630 / CIP 104966 / NBRC 100827 / IM2)).